The sequence spans 173 residues: uncharacterized protein (173 aa).

This sequence belongs to the M.jannaschii MJ0150/MJ0739/MJ0745/MJ1460/MJ1642 family.

This is an uncharacterized protein from Methanocaldococcus jannaschii (strain ATCC 43067 / DSM 2661 / JAL-1 / JCM 10045 / NBRC 100440) (Methanococcus jannaschii).